A 612-amino-acid polypeptide reads, in one-letter code: Phosphopentomutase (612 aa).

A2 is modified (N-acetylalanine). Residues R63 and S165 each coordinate alpha-D-glucose 1,6-bisphosphate. The active-site Phosphoserine intermediate is the S165. Residues S165, D322, D324, and D326 each contribute to the Mg(2+) site. A Phosphoserine modification is found at S165. Alpha-D-glucose 1,6-bisphosphate is bound by residues D326, R327, T400, E424, and K438.

It belongs to the phosphohexose mutase family. As to quaternary structure, monomer. Mg(2+) serves as cofactor.

The protein resides in the cytoplasm. It localises to the cytosol. It catalyses the reaction alpha-D-ribose 1-phosphate = D-ribose 5-phosphate. The enzyme catalyses 2-deoxy-alpha-D-ribose 1-phosphate = 2-deoxy-D-ribose 5-phosphate. The catalysed reaction is alpha-D-glucose 1-phosphate = alpha-D-glucose 6-phosphate. It carries out the reaction O-phospho-L-seryl-[protein] + alpha-D-glucose 1-phosphate = alpha-D-glucose 1,6-bisphosphate + L-seryl-[protein]. It catalyses the reaction alpha-D-glucose 1,6-bisphosphate + L-seryl-[protein] = O-phospho-L-seryl-[protein] + alpha-D-glucose 6-phosphate. Its activity is regulated as follows. The phosphomutase activity is stimulated by glucose 1,6-bisphosphate. Its function is as follows. Catalyzes the conversion of the nucleoside breakdown products ribose-1-phosphate and deoxyribose-1-phosphate to the corresponding 5-phosphopentoses. Catalyzes the reversible isomerization of alpha-D-glucose 1-phosphate to alpha-D-glucose 6-phosphate but with a lower catalytic efficiency. The mechanism proceeds via the intermediate compound alpha-D-glucose 1,6-bisphosphate. In vitro, also has a low glucose 1,6-bisphosphate synthase activity which is most probably not physiologically relevant. This Homo sapiens (Human) protein is Phosphopentomutase.